The chain runs to 178 residues: ATP-dependent protease subunit HslV (178 aa).

T7 is an active-site residue. Residues G162, C165, and T168 each coordinate Na(+).

Belongs to the peptidase T1B family. HslV subfamily. In terms of assembly, a double ring-shaped homohexamer of HslV is capped on each side by a ring-shaped HslU homohexamer. The assembly of the HslU/HslV complex is dependent on binding of ATP.

It localises to the cytoplasm. It carries out the reaction ATP-dependent cleavage of peptide bonds with broad specificity.. Its activity is regulated as follows. Allosterically activated by HslU binding. Functionally, protease subunit of a proteasome-like degradation complex believed to be a general protein degrading machinery. The protein is ATP-dependent protease subunit HslV of Burkholderia vietnamiensis (strain G4 / LMG 22486) (Burkholderia cepacia (strain R1808)).